A 179-amino-acid chain; its full sequence is Large ribosomal subunit protein uL5 (179 aa).

The protein belongs to the universal ribosomal protein uL5 family. In terms of assembly, part of the 50S ribosomal subunit; part of the 5S rRNA/L5/L18/L25 subcomplex. Contacts the 5S rRNA and the P site tRNA. Forms a bridge to the 30S subunit in the 70S ribosome.

This is one of the proteins that bind and probably mediate the attachment of the 5S RNA into the large ribosomal subunit, where it forms part of the central protuberance. In the 70S ribosome it contacts protein S13 of the 30S subunit (bridge B1b), connecting the 2 subunits; this bridge is implicated in subunit movement. Contacts the P site tRNA; the 5S rRNA and some of its associated proteins might help stabilize positioning of ribosome-bound tRNAs. This Burkholderia ambifaria (strain MC40-6) protein is Large ribosomal subunit protein uL5.